Here is a 1641-residue protein sequence, read N- to C-terminus: MHRAVDPPGARSAREAFALGGLSCAGAWSSCPPHPPPRSSWLPGGRCSASVGQPPLSAPLPPSHGSSSGHPNKPYYAPGTPTPRPLHGKLESLHGCVQALLREPAQPGLWEQLGQLYESEHDSEEAVCCYHRALRYGGSFAELGPRIGRLQQAQLWNFHAGSCQHRAKVLPPLEQVWNLLHLEHKRNYGAKRGGPPVKRSAEPPVVQPMPPAALSGPSGEEGLSPGGKRRRGCSSEQAGLPPGLPLPPPPPPPPPPPPPPPPPPPPLPGLAISPPFQLTKPGLWNTLHGDAWGPERKGSAPPERQEQRHSMPHSYPYPAPAYSAHPPSHRLVPNTPLGPGPRPPGAESHGCLPATRPPGSDLRESRVQRSRMDSSVSPAASTACVPYAPSRPPGLPGTSSSSSSSSSSNNTGLRGVEPSPGIPGADHYQNPALEISPHQARLGPSAHSSRKPFLTAPAATPHLSLPPGTPSSPPPPCPRLLRPPPPPAWMKGSACRAAREDGEILGELFFGAEGPPRPPPPPLPHRDGFLGPPNPRFSVGTQDSHNPPIPPTTTSSSSSSNSHSSSPTGPVPFPPPSYLARSIDPLPRPSSPTLSPQDPPLPPLTLALPPAPPSSCHQNTSGSFRRSESPRPRVSFPKTPEVGQGPPPGPVSKAPQPVPPGVGELPARGPRLFDFPPTPLEDQFEEPAEFKILPDGLANIMKMLDESIRKEEEQQQQQEAGVAPPPPLKEPFASLQPPFPSDTAPATTTAAPTTATTTTTTTTTTTQEEEKKPPPALPPPPPLAKFPPPPQPQPPPPPPASPASLLKSLASVLEGQKYCYRGTGAAVSTRPGSVPATQYSPSPASGATAPPPTSVAPSAQGSPKPSVSSSSQFSTSGGPWAREHRAGEEPAPGPVTPAQLPPPLPLPPARSESEVLEEISRACETLVERVGRSAINPVDTADPVDSGTEPQPPPAQAKEESGGVAVAAAGPGSGKRRQKEHRRHRRACRDSVGRRPREGRAKAKAKAPKEKSRRVLGNLDLQSEEIQGREKARPDVGGVSKVKTPTAPAPPPAPAPAAQPTPPSAPVPGKKTREEAPGPPGVSRADMLKLRSLSEGPPKELKIRLIKVESGDKETFIASEVEERRLRMADLTISHCAADVMRASKNAKVKGKFRESYLSPAQSVKPKINTEEKLPREKLNPPTPSIYLESKRDAFSPVLLQFCTDPRNPITVIRGLAGSLRLNLGLFSTKTLVEASGEHTVEVRTQVQQPSDENWDLTGTRQIWPCESSRSHTTIAKYAQYQASSFQESLQEERESEDEESEEPDSTTGTSPSSAPDPKNHHIIKFGTNIDLSDAKRWKPQLQELLKLPAFMRVTSTGNMLSHVGHTILGMNTVQLYMKVPGSRTPGHQENNNFCSVNINIGPGDCEWFAVHEHYWETISAFCDRHGVDYLTGSWWPILDDLYASNIPVYRFVQRPGDLVWINAGTVHWVQATGWCNNIAWNVGPLTAYQYQLALERYEWNEVKNVKSIVPMIHVSWNVARTVKISDPDLFKMIKFCLLQSMKHCQVQRESLVRAGKKIAYQGRVKDEPAYYCNECDVEVFNILFVTSENGSRNTYLVHCEGCARRRSAGLQGVVVLEQYRTEELAQAYDAFTLAPASTSR.

Disordered stretches follow at residues 42-89, 188-682, 704-808, and 824-1085; these read LPGG…LHGK, YGAK…PLED, LDES…LLKS, and GAAV…VSRA. A compositionally biased stretch (low complexity) spans 214-223; the sequence is LSGPSGEEGL. Serine 224 carries the post-translational modification Phosphoserine. Positions 242-268 are enriched in pro residues; sequence PGLPLPPPPPPPPPPPPPPPPPPPPLP. The segment covering 293–309 has biased composition (basic and acidic residues); sequence GPERKGSAPPERQEQRH. Low complexity predominate over residues 312-326; that stretch reads PHSYPYPAPAYSAHP. The span at 361 to 372 shows a compositional bias: basic and acidic residues; it reads DLRESRVQRSRM. Positions 396 to 415 are enriched in low complexity; the sequence is PGTSSSSSSSSSSNNTGLRG. Pro residues predominate over residues 467–488; it reads PGTPSSPPPPCPRLLRPPPPPA. Residues 552–568 show a composition bias toward low complexity; sequence TTTSSSSSSNSHSSSPT. Pro residues-rich tracts occupy residues 597–613 and 645–660; these read QDPP…PAPP and GPPP…PVPP. The span at 704-713 shows a compositional bias: basic and acidic residues; it reads LDESIRKEEE. Over residues 743-766 the composition is skewed to low complexity; that stretch reads TAPATTTAAPTTATTTTTTTTTTT. Residues 774–801 are compositionally biased toward pro residues; sequence PPALPPPPPLAKFPPPPQPQPPPPPPAS. The segment covering 855-879 has biased composition (low complexity); that stretch reads VAPSAQGSPKPSVSSSSQFSTSGGP. Positions 891-908 are enriched in pro residues; the sequence is APGPVTPAQLPPPLPLPP. Basic and acidic residues predominate over residues 918-931; it reads EISRACETLVERVG. The span at 974–987 shows a compositional bias: basic residues; it reads GKRRQKEHRRHRRA. The span at 988-1001 shows a compositional bias: basic and acidic residues; that stretch reads CRDSVGRRPREGRA. Positions 1002 to 1014 are enriched in basic residues; sequence KAKAKAPKEKSRR. Over residues 1047–1066 the composition is skewed to pro residues; that stretch reads APAPPPAPAPAAQPTPPSAP. Residue lysine 1107 forms a Glycyl lysine isopeptide (Lys-Gly) (interchain with G-Cter in SUMO2) linkage. The tract at residues 1286–1323 is disordered; it reads FQESLQEERESEDEESEEPDSTTGTSPSSAPDPKNHHI. Over residues 1294 to 1305 the composition is skewed to acidic residues; it reads RESEDEESEEPD. Low complexity predominate over residues 1306–1317; the sequence is STTGTSPSSAPD. The 164-residue stretch at 1337 to 1500 folds into the JmjC domain; that stretch reads RWKPQLQELL…YQLALERYEW (164 aa). Fe cation-binding residues include histidine 1388, glutamate 1390, and histidine 1468. Residues cysteine 1573, cysteine 1576, cysteine 1600, and cysteine 1603 each contribute to the Zn(2+) site.

It belongs to the UTX family. Interacts with TLE1. Component of the MLL4 complex, at least composed of KMT2B/MLL4, ASH2L, RBBP5, WDR5, and KDM6B. Interacts with TBX21, SMARCA4, SMARCC1 and SMARCC2. Requires L-ascorbate as cofactor. The cofactor is Fe(2+).

It localises to the nucleus. The catalysed reaction is N(6),N(6),N(6)-trimethyl-L-lysyl(27)-[histone H3] + 2 2-oxoglutarate + 2 O2 = N(6)-methyl-L-lysyl(27)-[histone H3] + 2 formaldehyde + 2 succinate + 2 CO2. Histone demethylase that specifically demethylates 'Lys-27' of histone H3, thereby playing a central role in histone code. Demethylates trimethylated and dimethylated H3 'Lys-27'. Plays a central role in regulation of posterior development, by regulating HOX gene expression. Involved in inflammatory response by participating in macrophage differentiation in case of inflammation by regulating gene expression and macrophage differentiation. Plays a demethylase-independent role in chromatin remodeling to regulate T-box family member-dependent gene expression by acting as a link between T-box factors and the SMARCA4-containing SWI/SNF remodeling complex. In Mus musculus (Mouse), this protein is Lysine-specific demethylase 6B (Kdm6b).